The sequence spans 399 residues: Phosphoglycerate kinase (399 aa).

Substrate contacts are provided by residues 24–26 (DYN), R39, 62–65 (HLGR), R121, and R154. Residues K204, G295, E326, and 355 to 358 (GGDS) each bind ATP.

The protein belongs to the phosphoglycerate kinase family. In terms of assembly, monomer.

It localises to the cytoplasm. The enzyme catalyses (2R)-3-phosphoglycerate + ATP = (2R)-3-phospho-glyceroyl phosphate + ADP. It participates in carbohydrate degradation; glycolysis; pyruvate from D-glyceraldehyde 3-phosphate: step 2/5. This chain is Phosphoglycerate kinase, found in Elusimicrobium minutum (strain Pei191).